A 477-amino-acid polypeptide reads, in one-letter code: UDP-N-acetylmuramoylalanine--D-glutamate ligase (477 aa).

ATP is bound at residue 127–133 (GTNGKTT).

This sequence belongs to the MurCDEF family.

It is found in the cytoplasm. It catalyses the reaction UDP-N-acetyl-alpha-D-muramoyl-L-alanine + D-glutamate + ATP = UDP-N-acetyl-alpha-D-muramoyl-L-alanyl-D-glutamate + ADP + phosphate + H(+). It functions in the pathway cell wall biogenesis; peptidoglycan biosynthesis. In terms of biological role, cell wall formation. Catalyzes the addition of glutamate to the nucleotide precursor UDP-N-acetylmuramoyl-L-alanine (UMA). The polypeptide is UDP-N-acetylmuramoylalanine--D-glutamate ligase (Prochlorococcus marinus (strain MIT 9515)).